The sequence spans 309 residues: Taste receptor type 2 member 113 (309 aa).

Residues 1 to 8 lie on the Extracellular side of the membrane; it reads MVAVLQST. The chain crosses the membrane as a helical span at residues 9-29; sequence FAIIFSMEFIVGTLGNGFIIL. The Cytoplasmic segment spans residues 30-55; the sequence is MTCIDWVRRRKISLVDQILTALAITR. The helical transmembrane segment at 56–76 threads the bilayer; the sequence is ITLILLVFIDWWVSVLFPALH. Residues 77-101 lie on the Extracellular side of the membrane; that stretch reads ETGKILRMYFISWTVINHCNLWLTA. Residues 102–122 traverse the membrane as a helical segment; that stretch reads SLSIIYFLKIASFSSIIFLYL. Topologically, residues 123 to 127 are cytoplasmic; it reads KFRVK. Residues 128–148 form a helical membrane-spanning segment; it reads NVVFVTLLVSLFFLFINTAIV. The Extracellular portion of the chain corresponds to 149-185; sequence NVYFDVCFDGVQRNVSQVSRLYNHEQICKFLSFTNPM. Residue asparagine 162 is glycosylated (N-linked (GlcNAc...) asparagine). A helical transmembrane segment spans residues 186 to 206; that stretch reads FAFIPFVTSMATFFLLIFSLW. The Cytoplasmic segment spans residues 207 to 229; the sequence is RHLKNMKHNAEGCRDVSTIVHIR. Residues 230-250 form a helical membrane-spanning segment; sequence ALQTIIVSVVLYSTFFLSFFV. Residues 251–262 lie on the Extracellular side of the membrane; that stretch reads KVWSSGSPERYL. The helical transmembrane segment at 263-283 threads the bilayer; the sequence is IFLFVWALGNAVLPAHTFVLI. At 284 to 309 the chain is on the cytoplasmic side; that stretch reads WGNCRLRWASLSLMLWLRYRFKNIDV.

It belongs to the G-protein coupled receptor T2R family.

The protein resides in the membrane. In terms of biological role, putative taste receptor which may play a role in the perception of bitterness. The sequence is that of Taste receptor type 2 member 113 from Rattus norvegicus (Rat).